Reading from the N-terminus, the 450-residue chain is Probable glycine dehydrogenase (decarboxylating) subunit 1 (450 aa).

Belongs to the GcvP family. N-terminal subunit subfamily. In terms of assembly, the glycine cleavage system is composed of four proteins: P, T, L and H. In this organism, the P 'protein' is a heterodimer of two subunits.

It carries out the reaction N(6)-[(R)-lipoyl]-L-lysyl-[glycine-cleavage complex H protein] + glycine + H(+) = N(6)-[(R)-S(8)-aminomethyldihydrolipoyl]-L-lysyl-[glycine-cleavage complex H protein] + CO2. In terms of biological role, the glycine cleavage system catalyzes the degradation of glycine. The P protein binds the alpha-amino group of glycine through its pyridoxal phosphate cofactor; CO(2) is released and the remaining methylamine moiety is then transferred to the lipoamide cofactor of the H protein. This Brevibacillus brevis (strain 47 / JCM 6285 / NBRC 100599) protein is Probable glycine dehydrogenase (decarboxylating) subunit 1.